A 103-amino-acid chain; its full sequence is Cell division suppressor protein YneA (103 aa).

One can recognise a LysM domain in the interval 36–87; that stretch reads VKIEVQSGDTLWGLADQVNDSKSIDKNAFIDWVTQHNDLASTEIQPGDILVI.

This sequence belongs to the YneA family.

Its subcellular location is the cytoplasm. Its function is as follows. Inhibits cell division during the SOS response. Affects a later stage of the cell division protein assembly, after the assembly of the Z ring, by probably suppressing recruitment of FtsL and/or DivIC to the division machinery. This Bacillus pumilus (strain SAFR-032) protein is Cell division suppressor protein YneA.